A 411-amino-acid polypeptide reads, in one-letter code: Citrate synthase (411 aa).

Active-site residues include His-304 and Asp-363.

Belongs to the citrate synthase family.

It carries out the reaction oxaloacetate + acetyl-CoA + H2O = citrate + CoA + H(+). It participates in carbohydrate metabolism; tricarboxylic acid cycle; isocitrate from oxaloacetate: step 1/2. The chain is Citrate synthase (gltA) from Rickettsia massiliae.